Reading from the N-terminus, the 63-residue chain is Large ribosomal subunit protein uL29 (63 aa).

This sequence belongs to the universal ribosomal protein uL29 family.

The polypeptide is Large ribosomal subunit protein uL29 (Shewanella loihica (strain ATCC BAA-1088 / PV-4)).